A 122-amino-acid polypeptide reads, in one-letter code: Small ribosomal subunit protein bS6 (122 aa).

Belongs to the bacterial ribosomal protein bS6 family.

In terms of biological role, binds together with bS18 to 16S ribosomal RNA. This chain is Small ribosomal subunit protein bS6 (rpsF), found in Neisseria meningitidis serogroup B (strain ATCC BAA-335 / MC58).